A 288-amino-acid chain; its full sequence is Male determiner protein Nix (288 aa).

3 RRM domains span residues 19 to 94 (YCIY…LPLS), 108 to 179 (IVVY…KVER), and 205 to 282 (RSIG…FVPE).

In terms of biological role, male determiner protein (M-factor) that controls male somatic sexual differentiation. Acts as a dominant factor that regulates the mRNA splicing of doublesex (dsx) or fruitless (fru) transcripts and promotes expression of male splice forms of dsx and fru. This Aedes aegypti (Yellowfever mosquito) protein is Male determiner protein Nix.